A 110-amino-acid chain; its full sequence is Late cornified envelope protein 1A (110 aa).

Low complexity predominate over residues 1–10 (MSCQQSQQQC). Disordered regions lie at residues 1–23 (MSCQ…CPPK) and 83–110 (QSSG…GGCC). The segment covering 11 to 23 (QPPPKCTPKCPPK) has biased composition (pro residues). Positions 83–95 (QSSGCCSQPSGGS) are enriched in low complexity. Residues 96–110 (SCCGGDSGQHSGGCC) are compositionally biased toward gly residues.

The protein belongs to the LCE family. Interacts with CYSRT1. In terms of tissue distribution, skin-specific. Expression was readily detected in adult trunk skin, adult arm skin, fetal skin, penal skin, vulva, esophagus and tongue. Not expressed in the cervix, rectum, lung, colon, or placenta.

Functionally, precursors of the cornified envelope of the stratum corneum. The sequence is that of Late cornified envelope protein 1A (LCE1A) from Homo sapiens (Human).